Reading from the N-terminus, the 415-residue chain is Multidrug resistance protein MdtA (415 aa).

Positions 1–21 are cleaved as a signal peptide; sequence MKGSYKSRWVIVIVVVIAAIA. Polar residues predominate over residues 34 to 47; it reads SAAPGATKQAQQSP. Disordered regions lie at residues 34-60 and 392-415; these read SAAP…GPLA and EAQS…GARS. Basic and acidic residues predominate over residues 399-415; it reads PEEKATSREYAKKGARS.

This sequence belongs to the membrane fusion protein (MFP) (TC 8.A.1) family. In terms of assembly, part of a tripartite efflux system composed of MdtA, MdtB and MdtC.

The protein localises to the cell inner membrane. Functionally, the MdtABC tripartite complex confers resistance against novobiocin and deoxycholate. The protein is Multidrug resistance protein MdtA of Escherichia fergusonii (strain ATCC 35469 / DSM 13698 / CCUG 18766 / IAM 14443 / JCM 21226 / LMG 7866 / NBRC 102419 / NCTC 12128 / CDC 0568-73).